A 151-amino-acid chain; its full sequence is Small ribosomal subunit protein uS11 (151 aa).

The disordered stretch occupies residues 129–151 (IEDVTPVPSDSTRRKGGRRGRRL). The span at 142 to 151 (RKGGRRGRRL) shows a compositional bias: basic residues.

It belongs to the universal ribosomal protein uS11 family.

The chain is Small ribosomal subunit protein uS11 (RPS14) from Procambarus clarkii (Red swamp crayfish).